Consider the following 175-residue polypeptide: Large ribosomal subunit protein uL6 (175 aa).

Belongs to the universal ribosomal protein uL6 family. Part of the 50S ribosomal subunit.

Its function is as follows. This protein binds to the 23S rRNA, and is important in its secondary structure. It is located near the subunit interface in the base of the L7/L12 stalk, and near the tRNA binding site of the peptidyltransferase center. The polypeptide is Large ribosomal subunit protein uL6 (Xylella fastidiosa (strain M12)).